Reading from the N-terminus, the 1395-residue chain is G-protein coupled receptor-associated sorting protein 1 (1395 aa).

Disordered regions lie at residues 1–25, 45–83, and 269–288; these read MTGA…VVGG, QIMP…AKAI, and TNTW…FRSK. The segment covering 269–281 has biased composition (basic and acidic residues); sequence TNTWSGPREDPNS. Ser-297 carries the post-translational modification Phosphoserine. The tract at residues 446-469 is disordered; the sequence is SMGTGASSKSRPRTDGERIGDSLF. A compositionally biased stretch (basic and acidic residues) spans 457–469; the sequence is PRTDGERIGDSLF. Residues Ser-631 and Ser-899 each carry the phosphoserine modification. The tract at residues 899–1395 is OPRD1-binding; it reads SETEEETIFG…QNDPEGDQEN (497 aa).

The protein belongs to the GPRASP family. Interacts with cytoplasmic tails of a variety of G-protein coupled receptors such as D2 dopamine receptor/DRD2, delta opioid receptor/OPRD1, beta-2 adrenergic receptor/ADRB2 and D4 dopamine receptor/DRD4. Interacts with PER1. Interacts with BECN2; the interaction is direct. Expressed in the brain, with lower expression in medulla, spinal cord and substantia nigra.

It localises to the cytoplasm. Functionally, modulates lysosomal sorting and functional down-regulation of a variety of G-protein coupled receptors. Targets receptors for degradation in lysosomes via its interaction with BECN2. This Homo sapiens (Human) protein is G-protein coupled receptor-associated sorting protein 1 (GPRASP1).